A 194-amino-acid chain; its full sequence is Protein GrpE (194 aa).

The interval 1–39 is disordered; it reads MTNHEQDQQDNSELLDDDQVTLESQQAADSGAEAPASDD. The segment covering 8 to 20 has biased composition (acidic residues); the sequence is QQDNSELLDDDQV.

It belongs to the GrpE family. As to quaternary structure, homodimer.

It is found in the cytoplasm. Its function is as follows. Participates actively in the response to hyperosmotic and heat shock by preventing the aggregation of stress-denatured proteins, in association with DnaK and GrpE. It is the nucleotide exchange factor for DnaK and may function as a thermosensor. Unfolded proteins bind initially to DnaJ; upon interaction with the DnaJ-bound protein, DnaK hydrolyzes its bound ATP, resulting in the formation of a stable complex. GrpE releases ADP from DnaK; ATP binding to DnaK triggers the release of the substrate protein, thus completing the reaction cycle. Several rounds of ATP-dependent interactions between DnaJ, DnaK and GrpE are required for fully efficient folding. This chain is Protein GrpE, found in Saccharophagus degradans (strain 2-40 / ATCC 43961 / DSM 17024).